Here is a 168-residue protein sequence, read N- to C-terminus: G/U mismatch-specific DNA glycosylase (168 aa).

The protein belongs to the uracil-DNA glycosylase (UDG) superfamily. TDG/mug family. Binds DNA as a monomer.

It is found in the cytoplasm. It catalyses the reaction Specifically hydrolyzes mismatched double-stranded DNA and polynucleotides, releasing free uracil.. Excises ethenocytosine and uracil, which can arise by alkylation or deamination of cytosine, respectively, from the corresponding mispairs with guanine in ds-DNA. It is capable of hydrolyzing the carbon-nitrogen bond between the sugar-phosphate backbone of the DNA and the mispaired base. The complementary strand guanine functions in substrate recognition. Required for DNA damage lesion repair in stationary-phase cells. In Salmonella paratyphi B (strain ATCC BAA-1250 / SPB7), this protein is G/U mismatch-specific DNA glycosylase.